A 338-amino-acid polypeptide reads, in one-letter code: Heat-inducible transcription repressor HrcA (338 aa).

This sequence belongs to the HrcA family.

In terms of biological role, negative regulator of class I heat shock genes (grpE-dnaK-dnaJ and groELS operons). Prevents heat-shock induction of these operons. This chain is Heat-inducible transcription repressor HrcA, found in Bacillus thuringiensis (strain Al Hakam).